The primary structure comprises 131 residues: Profilin-3 (131 aa).

The protein belongs to the profilin family. Occurs in many kinds of cells as a complex with monomeric actin in a 1:1 ratio.

Its subcellular location is the cytoplasm. The protein resides in the cytoskeleton. Functionally, binds to actin and affects the structure of the cytoskeleton. At high concentrations, profilin prevents the polymerization of actin, whereas it enhances it at low concentrations. By binding to PIP2, it inhibits the formation of IP3 and DG. This is Profilin-3 from Lilium longiflorum (Trumpet lily).